Consider the following 510-residue polypeptide: Cytochrome P450 monooxygenase penQ (510 aa).

The helical transmembrane segment at 9–26 threads the bilayer; it reads WIVTLIVAATTYCTLRWV. 2 N-linked (GlcNAc...) asparagine glycosylation sites follow: asparagine 148 and asparagine 341. Cysteine 448 serves as a coordination point for heme. Asparagine 482 carries an N-linked (GlcNAc...) asparagine glycan.

Belongs to the cytochrome P450 family. Heme serves as cofactor.

It is found in the membrane. It functions in the pathway secondary metabolite biosynthesis. Its function is as follows. Cytochrome P450 monooxygenase; part of the gene cluster that mediates the biosynthesis of the indole diterpenes penitrems. The geranylgeranyl diphosphate (GGPP) synthase penG catalyzes the first step in penitrem biosynthesis via conversion of farnesyl pyrophosphate and isopentyl pyrophosphate into geranylgeranyl pyrophosphate (GGPP). Condensation of indole-3-glycerol phosphate with GGPP by the prenyl transferase penC then forms 3-geranylgeranylindole (3-GGI). Epoxidation by the FAD-dependent monooxygenase penM leads to a epoxidized-GGI that is substrate of the terpene cyclase penB for cyclization to yield paspaline. Paspaline is subsequently converted to 13-desoxypaxilline by the cytochrome P450 monooxygenase penP, the latter being then converted to paxilline by the cytochrome P450 monooxygenase penQ. Paxilline is converted to beta-paxitriol via C-10 ketoreduction by the short-chain dehydrogenase PC-15 which can be monoprenylated at the C-20 by the indole diterpene prenyltransferase penD. A two-step elimination (acetylation and elimination) process performed by the O-acetyltransferase PC-16 and the P.simplicissimum ptmI-ortholog not yet identified in P.crustosum, leads to the production of the prenylated form of penijanthine. The FAD-linked oxidoreductase ptmO then converts the prenylated form of penijanthine into PC-M5 which is in turn transformed into PC-M4 by the aromatic dimethylallyltransferase PC-22. A series of oxidation steps involving 4 cytochrome P450 monooxygenases (PC-21, PC-05, PC-23, PC-20) and a FAD-dependent monooxygenase (PC-14) are required for the transformation of PC-M4 to penitrems A and E. Synthesis of these final products is proposed to proceed via penitrems D and C (PC-21, PC-05, PC-14) and penitrems B and F (PC-21, PC-05, PC-14, PC-23). This Penicillium crustosum (Blue mold fungus) protein is Cytochrome P450 monooxygenase penQ.